Consider the following 219-residue polypeptide: Uracil phosphoribosyltransferase 1 (219 aa).

GTP-binding positions include Arg-33, Arg-42, and 76–79 (DGRI). Residue Arg-86 coordinates 5-phospho-alpha-D-ribose 1-diphosphate. Arg-103 is a GTP binding site. Arg-111 is a binding site for 5-phospho-alpha-D-ribose 1-diphosphate. Arg-132 is a binding site for GTP. Residues Asp-138 and 138-146 (DPMLATGGS) contribute to the 5-phospho-alpha-D-ribose 1-diphosphate site. Tyr-202 is a binding site for D-ribose 5-phosphate. Uracil is bound by residues Ile-203 and 208–210 (GDF). Residue Asp-209 participates in 5-phospho-alpha-D-ribose 1-diphosphate binding.

This sequence belongs to the UPRTase family. It depends on Mg(2+) as a cofactor.

The enzyme catalyses UMP + diphosphate = 5-phospho-alpha-D-ribose 1-diphosphate + uracil. It functions in the pathway pyrimidine metabolism; UMP biosynthesis via salvage pathway; UMP from uracil: step 1/1. With respect to regulation, allosterically activated by GTP. Functionally, catalyzes the conversion of uracil and 5-phospho-alpha-D-ribose 1-diphosphate (PRPP) to UMP and diphosphate. The chain is Uracil phosphoribosyltransferase 1 from Schizosaccharomyces pombe (strain 972 / ATCC 24843) (Fission yeast).